A 129-amino-acid polypeptide reads, in one-letter code: MKSLQFCFLFCCWKAICCNSCELTNITITVEKEECNFCISINTTWCAGYCYTRDLVYKDPARPNIQKTCTFKELVYETVKVPGCAHHADSLYTYPVATECHCGKCDSDSTDCTVRGLGPSYCSFSEMKE.

The N-terminal stretch at 1 to 20 (MKSLQFCFLFCCWKAICCNS) is a signal peptide. 6 cysteine pairs are disulfide-bonded: C21–C69, C35–C84, C38–C122, C46–C100, C50–C102, and C105–C112. N-linked (GlcNAc...) asparagine glycans are attached at residues N25 and N42.

The protein belongs to the glycoprotein hormones subunit beta family. Heterodimer. The active follitropin is a heterodimer composed of an alpha chain/CGA shared with other hormones and a unique beta chain/FSHB shown here.

It localises to the secreted. Together with the alpha chain CGA constitutes follitropin, the follicle-stimulating hormone, and provides its biological specificity to the hormone heterodimer. Binds FSHR, a G protein-coupled receptor, on target cells to activate downstream signaling pathways. Follitropin is involved in follicle development and spermatogenesis in reproductive organs. The polypeptide is Follitropin subunit beta (FSHB) (Sus scrofa (Pig)).